The chain runs to 458 residues: MENIWLEAQTNLKQVLTEQTYSTWIDPLKFLGATVDTIVLEVPSSFFQKWVTDKYLAMIKEAISAVNGKSYQIEFHVAEEKPEAAHEAKPEKEAKPAREKERDKDKEKEKDREKEKKELVPNLNPKYTFESFVSGPSNQFAYAASQAVANKPATNYNPLFIYGGVGLGKTHLVNAIGNHILAKNPKAKICYYSSEKFMNEMINSLRYKKMDEFRNKFRKMDLLLIDDIQFMAGKEATQEEFFHTFNALYESHKQIVVTSDKFPKDIPGLEERLRSRFEWGLIADIQPPGVETKVAILKKKSDMHAVNLPDDVALFLAEGANSNIRELEGMLIRLEAFASLTGQEITLSMAREVMKDIIVEKTRDITVEMIQKTVAEHFRIKVSELKSDKRIKTLVVPRQIAIYICRELTKASYPEIGEKFGGKDHSTIIHSVKKIEKQIAGDDEFKATVEDIRKKLFT.

The domain I, interacts with DnaA modulators stretch occupies residues 1–84 (MENIWLEAQT…FHVAEEKPEA (84 aa)). Basic and acidic residues predominate over residues 80–119 (EKPEAAHEAKPEKEAKPAREKERDKDKEKEKDREKEKKEL). The disordered stretch occupies residues 80 to 120 (EKPEAAHEAKPEKEAKPAREKERDKDKEKEKDREKEKKELV). The domain II stretch occupies residues 84–121 (AAHEAKPEKEAKPAREKERDKDKEKEKDREKEKKELVP). The interval 122–338 (NLNPKYTFES…GMLIRLEAFA (217 aa)) is domain III, AAA+ region. Residues G166, G168, K169, and T170 each contribute to the ATP site. The domain IV, binds dsDNA stretch occupies residues 339-458 (SLTGQEITLS…VEDIRKKLFT (120 aa)).

It belongs to the DnaA family. As to quaternary structure, oligomerizes as a right-handed, spiral filament on DNA at oriC.

The protein resides in the cytoplasm. In terms of biological role, plays an essential role in the initiation and regulation of chromosomal replication. ATP-DnaA binds to the origin of replication (oriC) to initiate formation of the DNA replication initiation complex once per cell cycle. Binds the DnaA box (a 9 base pair repeat at the origin) and separates the double-stranded (ds)DNA. Forms a right-handed helical filament on oriC DNA; dsDNA binds to the exterior of the filament while single-stranded (ss)DNA is stabiized in the filament's interior. The ATP-DnaA-oriC complex binds and stabilizes one strand of the AT-rich DNA unwinding element (DUE), permitting loading of DNA polymerase. After initiation quickly degrades to an ADP-DnaA complex that is not apt for DNA replication. Binds acidic phospholipids. The sequence is that of Chromosomal replication initiator protein DnaA from Citrifermentans bemidjiense (strain ATCC BAA-1014 / DSM 16622 / JCM 12645 / Bem) (Geobacter bemidjiensis).